We begin with the raw amino-acid sequence, 394 residues long: Phosphopentomutase (394 aa).

D13, D286, H291, D327, H328, and H339 together coordinate Mn(2+).

Belongs to the phosphopentomutase family. Mn(2+) serves as cofactor.

Its subcellular location is the cytoplasm. It catalyses the reaction 2-deoxy-alpha-D-ribose 1-phosphate = 2-deoxy-D-ribose 5-phosphate. The enzyme catalyses alpha-D-ribose 1-phosphate = D-ribose 5-phosphate. It participates in carbohydrate degradation; 2-deoxy-D-ribose 1-phosphate degradation; D-glyceraldehyde 3-phosphate and acetaldehyde from 2-deoxy-alpha-D-ribose 1-phosphate: step 1/2. In terms of biological role, isomerase that catalyzes the conversion of deoxy-ribose 1-phosphate (dRib-1-P) and ribose 1-phosphate (Rib-1-P) to deoxy-ribose 5-phosphate (dRib-5-P) and ribose 5-phosphate (Rib-5-P), respectively. The chain is Phosphopentomutase from Bacillus cereus (strain ATCC 10987 / NRS 248).